The sequence spans 661 residues: UvrABC system protein B (661 aa).

The Helicase ATP-binding domain maps to 25-182; sequence AGLNSKKRSQ…NDLINLQYKR (158 aa). Residue 38-45 participates in ATP binding; it reads GITGSGKT. Residues 91–114 carry the Beta-hairpin motif; that stretch reads YYDYYQPEAYIARTDTFIEKDSSI. Residues 430-592 enclose the Helicase C-terminal domain; that stretch reads QVEDLISEIQ…IIPKTINRAI (163 aa). Positions 621–656 constitute a UVR domain; sequence KANINKLNKEMLKAASNLEFEQAAKLRDQLKTLEAA.

Belongs to the UvrB family. As to quaternary structure, forms a heterotetramer with UvrA during the search for lesions. Interacts with UvrC in an incision complex.

Its subcellular location is the cytoplasm. Functionally, the UvrABC repair system catalyzes the recognition and processing of DNA lesions. A damage recognition complex composed of 2 UvrA and 2 UvrB subunits scans DNA for abnormalities. Upon binding of the UvrA(2)B(2) complex to a putative damaged site, the DNA wraps around one UvrB monomer. DNA wrap is dependent on ATP binding by UvrB and probably causes local melting of the DNA helix, facilitating insertion of UvrB beta-hairpin between the DNA strands. Then UvrB probes one DNA strand for the presence of a lesion. If a lesion is found the UvrA subunits dissociate and the UvrB-DNA preincision complex is formed. This complex is subsequently bound by UvrC and the second UvrB is released. If no lesion is found, the DNA wraps around the other UvrB subunit that will check the other stand for damage. The protein is UvrABC system protein B of Rickettsia akari (strain Hartford).